Here is a 167-residue protein sequence, read N- to C-terminus: Kininogen-1 (167 aa).

An N-terminal signal peptide occupies residues 1–23 (MRLWFCLSFFIILCLEHFPGTLA).

Belongs to the bradykinin-related peptide family. In terms of tissue distribution, expressed by the skin glands.

Its subcellular location is the secreted. In terms of biological role, vasodilator. Bradykinin produces in vitro relaxation of rat arterial smooth muscle and constriction of intestinal smooth muscle. May target bradykinin receptors (BDKRB). The sequence is that of Kininogen-1 from Bombina orientalis (Oriental fire-bellied toad).